The following is a 151-amino-acid chain: Small ribosomal subunit protein uS15 (151 aa).

The protein belongs to the universal ribosomal protein uS15 family.

In Ciona intestinalis (Transparent sea squirt), this protein is Small ribosomal subunit protein uS15 (RPS13).